Here is a 466-residue protein sequence, read N- to C-terminus: ATP synthase subunit beta (466 aa).

153–160 (GGAGVGKT) contributes to the ATP binding site.

Belongs to the ATPase alpha/beta chains family. In terms of assembly, F-type ATPases have 2 components, CF(1) - the catalytic core - and CF(0) - the membrane proton channel. CF(1) has five subunits: alpha(3), beta(3), gamma(1), delta(1), epsilon(1). CF(0) has three main subunits: a(1), b(2) and c(9-12). The alpha and beta chains form an alternating ring which encloses part of the gamma chain. CF(1) is attached to CF(0) by a central stalk formed by the gamma and epsilon chains, while a peripheral stalk is formed by the delta and b chains.

The protein resides in the cell membrane. It carries out the reaction ATP + H2O + 4 H(+)(in) = ADP + phosphate + 5 H(+)(out). Functionally, produces ATP from ADP in the presence of a proton gradient across the membrane. The catalytic sites are hosted primarily by the beta subunits. The protein is ATP synthase subunit beta of Leuconostoc mesenteroides subsp. mesenteroides (strain ATCC 8293 / DSM 20343 / BCRC 11652 / CCM 1803 / JCM 6124 / NCDO 523 / NBRC 100496 / NCIMB 8023 / NCTC 12954 / NRRL B-1118 / 37Y).